The sequence spans 430 residues: S-adenosylmethionine synthase (430 aa).

H14 is an ATP binding site. Residue D16 participates in Mg(2+) binding. Residue E42 participates in K(+) binding. L-methionine-binding residues include E55 and Q98. The tract at residues 98–108 (QSADINRGVER) is flexible loop. Residues 164-166 (DAK), 254-255 (KF), D263, 269-270 (RK), A286, and K290 contribute to the ATP site. L-methionine is bound at residue D263. Position 294 (K294) interacts with L-methionine.

Belongs to the AdoMet synthase family. As to quaternary structure, homotetramer; dimer of dimers. It depends on Mg(2+) as a cofactor. The cofactor is K(+).

The protein localises to the cytoplasm. It carries out the reaction L-methionine + ATP + H2O = S-adenosyl-L-methionine + phosphate + diphosphate. The protein operates within amino-acid biosynthesis; S-adenosyl-L-methionine biosynthesis; S-adenosyl-L-methionine from L-methionine: step 1/1. Catalyzes the formation of S-adenosylmethionine (AdoMet) from methionine and ATP. The overall synthetic reaction is composed of two sequential steps, AdoMet formation and the subsequent tripolyphosphate hydrolysis which occurs prior to release of AdoMet from the enzyme. In Phocaeicola vulgatus (strain ATCC 8482 / DSM 1447 / JCM 5826 / CCUG 4940 / NBRC 14291 / NCTC 11154) (Bacteroides vulgatus), this protein is S-adenosylmethionine synthase.